The following is a 486-amino-acid chain: Membrane-bound lytic murein transglycosylase F (486 aa).

The N-terminal stretch at 1 to 21 (MTRIKLNYFVIGVVALLLALA) is a signal peptide. The non-LT domain stretch occupies residues 22-268 (LWPNIPWRNG…RLEEKYLGHV (247 aa)). An LT domain region spans residues 269-486 (GSFDYVDTKT…VVGPGWSINN (218 aa)). Residue E313 is part of the active site.

In the N-terminal section; belongs to the bacterial solute-binding protein 3 family. The protein in the C-terminal section; belongs to the transglycosylase Slt family.

Its subcellular location is the cell outer membrane. The enzyme catalyses Exolytic cleavage of the (1-&gt;4)-beta-glycosidic linkage between N-acetylmuramic acid (MurNAc) and N-acetylglucosamine (GlcNAc) residues in peptidoglycan, from either the reducing or the non-reducing ends of the peptidoglycan chains, with concomitant formation of a 1,6-anhydrobond in the MurNAc residue.. Functionally, murein-degrading enzyme that degrades murein glycan strands and insoluble, high-molecular weight murein sacculi, with the concomitant formation of a 1,6-anhydromuramoyl product. Lytic transglycosylases (LTs) play an integral role in the metabolism of the peptidoglycan (PG) sacculus. Their lytic action creates space within the PG sacculus to allow for its expansion as well as for the insertion of various structures such as secretion systems and flagella. In Yersinia enterocolitica serotype O:8 / biotype 1B (strain NCTC 13174 / 8081), this protein is Membrane-bound lytic murein transglycosylase F.